The primary structure comprises 934 residues: MGSFAGACEIVEEKDDEVRLPKHSGRYGKSVMGSSSKDLVERKQREYHGSLEYDIDMLFQSISVKPSTTRLMSSSFHHHETSASAGPSRTTSPSKRIASMKKPGTPQSPRFVGLSDSVSLKQALRDRCISKASEMAAQKRLSKSAAASPRVSEADRIKSLYNQVSNESTSSRSGLVPVDKGKGSLVEIPLMPVNDKPSSSKSVPQRFEDPSNPISEPSQAGTSFGLQGVGNQTREIKLLHRSNKPGSCLSSGSGDYEIELDENVASPSTHAFVEDDVIEIDKHVTSLPSHSSKKVNATELDKNISSSAVDSEQKGKLDDAPNSGTENGKTVRKVTRMIPRPKQPKKKILLKKKLKIGVVSATYPTKDDEEIVPSLDSSANQLLCQRCHCSLKSTSIDDNPPSYTSSHNPKICTDSLSSVSNKEAHQGSDENSSGSCNVSQSSEADIVIMKQDVSSSNNSGIGAMVEKETENPTSSEKFEFSLSSKDSLGDYSRSTSISEESNLSRFSCGNKPHMSMDVRWEAIKHIKVQYGSLGLRHFNLLKKLGCGDIGTVYLAELIGTNCLFAIKVMDNEFLARRKKSPRAQAEREILKMLDHPFLPTLYAQFTSDNLSCLVMEYCPGGDLHVLRQKQLGRCFPEPAARFYVAEILLALEYLHMLGIIYRDLKPENILVREDGHIMLTDFDLSLRCAVNPTLVRSNSPPGKDPARISGPYNTSNCIQPFCITEPSCQVSCFSPRLSSNQQQGRKPKRGDHLSKTQQHLSRSLPQLVAEPTEARSNSFVGTHEYLAPEIIKGEGHGAAVDWWTFGVLLYELLYGKTPFKGYNNDETLANVVLQNLKFPDSPLVSFQAKDLIRGLLVKEPENRLGSEKGSVEIKRHPFFEGLNWALIRCAIPPELPDFYEYGGGPEAAADSPGGSNNRYLECKAIGDHLEFELF.

Disordered regions lie at residues 20 to 40 (LPKHSGRYGKSVMGSSSKDLV), 70 to 113 (RLMS…RFVG), 189 to 227 (PLMPVNDKPSSSKSVPQRFEDPSNPISEPSQAGTSFGLQ), 305 to 343 (SSSAVDSEQKGKLDDAPNSGTENGKTVRKVTRMIPRPKQ), 395 to 438 (SIDD…SCNV), and 466 to 493 (EKETENPTSSEKFEFSLSSKDSLGDYSR). 2 stretches are compositionally biased toward polar residues: residues 82-94 (SASAGPSRTTSPS) and 212-227 (NPISEPSQAGTSFGLQ). Residues 395–421 (SIDDNPPSYTSSHNPKICTDSLSSVSN) are compositionally biased toward polar residues. A Protein kinase domain is found at 538–879 (FNLLKKLGCG…SVEIKRHPFF (342 aa)). ATP is bound by residues 544 to 552 (LGCGDIGTV) and lysine 567. Catalysis depends on aspartate 663, which acts as the Proton acceptor. The tract at residues 738–773 (SSNQQQGRKPKRGDHLSKTQQHLSRSLPQLVAEPTE) is disordered. Over residues 755 to 764 (KTQQHLSRSL) the composition is skewed to polar residues.

It belongs to the protein kinase superfamily. Ser/Thr protein kinase family. As to quaternary structure, interacts with KCBP. Interacts with PERK8, PERK9, PERK10 and PERK13. Post-translationally, autophosphorylated. In terms of tissue distribution, expressed in roots, cauline leaves, flowers and siliques.

Its subcellular location is the cytoplasm. It localises to the nucleus. The enzyme catalyses L-seryl-[protein] + ATP = O-phospho-L-seryl-[protein] + ADP + H(+). It catalyses the reaction L-threonyl-[protein] + ATP = O-phospho-L-threonyl-[protein] + ADP + H(+). Functionally, could be involved in the negative regulation of root growth. This is Serine/threonine-protein kinase KIPK1 from Arabidopsis thaliana (Mouse-ear cress).